Reading from the N-terminus, the 90-residue chain is Small ribosomal subunit protein uS15c (90 aa).

This sequence belongs to the universal ribosomal protein uS15 family. As to quaternary structure, part of the 30S ribosomal subunit.

The protein localises to the plastid. The protein resides in the chloroplast. The sequence is that of Small ribosomal subunit protein uS15c (rps15) from Platanus occidentalis (Sycamore).